A 94-amino-acid chain; its full sequence is Sec-independent protein translocase protein TatA (94 aa).

Residues 1–21 form a helical membrane-spanning segment; sequence MFGRLGAPEIILILVVIILLF. A disordered region spans residues 44-94; that stretch reads AKAMKSEGQESTPAGPPNTDEQPPAQRTIQAAPGDVTSSRPVSEPTDTTKR. Positions 62–72 are enriched in polar residues; the sequence is TDEQPPAQRTI.

It belongs to the TatA/E family. The Tat system comprises two distinct complexes: a TatABC complex, containing multiple copies of TatA, TatB and TatC subunits, and a separate TatA complex, containing only TatA subunits. Substrates initially bind to the TatABC complex, which probably triggers association of the separate TatA complex to form the active translocon.

It localises to the cell membrane. In terms of biological role, part of the twin-arginine translocation (Tat) system that transports large folded proteins containing a characteristic twin-arginine motif in their signal peptide across membranes. TatA could form the protein-conducting channel of the Tat system. The sequence is that of Sec-independent protein translocase protein TatA from Streptomyces avermitilis (strain ATCC 31267 / DSM 46492 / JCM 5070 / NBRC 14893 / NCIMB 12804 / NRRL 8165 / MA-4680).